The primary structure comprises 734 residues: MALRFPRFSQGLAQDPTTRRIWFGIATAHDFESHDDITEERLYQNIFASHFGQLAIIFLWTSGNLFHVAWQGNFESWVQDPLHVRPIAHAIWDPHFGQPAVEAFTRGGAPGPVNIAYSGVYQWWYTIGLRTNEDLYTGALFLLFLSAISLIGGWLHLQPKWKPSVSWFKNAESRLNHHLSGLFGVSSLAWTGHLVHVAIPASRGEYVRWNNFLDVLPHPQGLGPLFSGQWNLYAQNPDSSSHLFGTSQGAGTAILTLLGGFHPQTQSLWLTDMAHHHLAIAFIFLIAGHMYRTNFGIGHSIKDLLEAHTPPGGRLGRGHKGLYDTINNSLHFQLGLALACLGVITSLVAQHMYSLPAYAFIAQDFTTQAASYTHHQYIAGFIMTGAFAHGAIFFIRDYNPEQNEDNVLARMLDHKEAIISHLSWASLFLGFHTLGLYVHNDVMLAFGTPEKQILIEPIFAQWIQSAHGKTLYGFDVLLSSTSGPAFNAGRSIWLPGWLSAVNENSNSLFLTIGPGDFLVHHAIALGLHTTTLILVKGALDARGSKLMPDKKDFGYSFPCDGPGRGGTCDISAWDAFYLAVFWMLNTIGWVTFYWHWKHITLWQGNVSQFNESSTYLMGWLRDYLWLNSSQLINGYNPFGMNSLSVWAWMFLFGHLVWATGFMFLISWRGYWQGLIETLAWAHERTPLANLIRWRDKPVALSIVQARLVGLAHFSVGYIFTYAAFLIASTSGKFG.

The next 8 helical transmembrane spans lie at 46-69, 135-158, 175-199, 273-291, 330-353, 369-395, 417-439, and 517-535; these read IFAS…FHVA, LYTG…LHLQ, LNHH…HVAI, MAHH…GHMY, LHFQ…QHMY, AASY…IFFI, AIIS…LYVH, and FLVH…LILV. Positions 559 and 568 each coordinate [4Fe-4S] cluster. Transmembrane regions (helical) follow at residues 575 to 596 and 643 to 665; these read AFYL…YWHW and LSVW…MFLI. Chlorophyll a contacts are provided by His654, Met662, and Tyr670. Residue Trp671 coordinates phylloquinone. Residues 707–727 traverse the membrane as a helical segment; the sequence is LVGLAHFSVGYIFTYAAFLIA.

Belongs to the PsaA/PsaB family. As to quaternary structure, the PsaA/B heterodimer binds the P700 chlorophyll special pair and subsequent electron acceptors. PSI consists of a core antenna complex that captures photons, and an electron transfer chain that converts photonic excitation into a charge separation. The eukaryotic PSI reaction center is composed of at least 11 subunits. P700 is a chlorophyll a/chlorophyll a' dimer, A0 is one or more chlorophyll a, A1 is one or both phylloquinones and FX is a shared 4Fe-4S iron-sulfur center. is required as a cofactor.

Its subcellular location is the plastid. The protein resides in the chloroplast thylakoid membrane. The enzyme catalyses reduced [plastocyanin] + hnu + oxidized [2Fe-2S]-[ferredoxin] = oxidized [plastocyanin] + reduced [2Fe-2S]-[ferredoxin]. Functionally, psaA and PsaB bind P700, the primary electron donor of photosystem I (PSI), as well as the electron acceptors A0, A1 and FX. PSI is a plastocyanin-ferredoxin oxidoreductase, converting photonic excitation into a charge separation, which transfers an electron from the donor P700 chlorophyll pair to the spectroscopically characterized acceptors A0, A1, FX, FA and FB in turn. Oxidized P700 is reduced on the lumenal side of the thylakoid membrane by plastocyanin. The polypeptide is Photosystem I P700 chlorophyll a apoprotein A2 (Acorus calamus (Sweet flag)).